A 155-amino-acid polypeptide reads, in one-letter code: Small ribosomal subunit protein uS7 (155 aa).

Belongs to the universal ribosomal protein uS7 family. Part of the 30S ribosomal subunit. Contacts proteins S9 and S11.

In terms of biological role, one of the primary rRNA binding proteins, it binds directly to 16S rRNA where it nucleates assembly of the head domain of the 30S subunit. Is located at the subunit interface close to the decoding center, probably blocks exit of the E-site tRNA. The chain is Small ribosomal subunit protein uS7 from Xanthomonas oryzae pv. oryzae (strain MAFF 311018).